A 226-amino-acid polypeptide reads, in one-letter code: Uracil-DNA glycosylase (226 aa).

Aspartate 64 serves as the catalytic Proton acceptor.

The protein belongs to the uracil-DNA glycosylase (UDG) superfamily. UNG family.

The protein resides in the cytoplasm. The catalysed reaction is Hydrolyzes single-stranded DNA or mismatched double-stranded DNA and polynucleotides, releasing free uracil.. Its function is as follows. Excises uracil residues from the DNA which can arise as a result of misincorporation of dUMP residues by DNA polymerase or due to deamination of cytosine. The protein is Uracil-DNA glycosylase of Vibrio vulnificus (strain CMCP6).